Reading from the N-terminus, the 95-residue chain is uncharacterized protein (95 aa).

This is an uncharacterized protein from Bacillus subtilis (strain 168).